Reading from the N-terminus, the 2194-residue chain is Nucleosome-remodeling factor subunit NURF301-like (2194 aa).

The span at M1–H12 shows a compositional bias: basic residues. The interval M1–F137 is disordered. Residues A60–S79 show a composition bias toward basic and acidic residues. A compositionally biased stretch (polar residues) spans V80–T93. The span at S94 to L112 shows a compositional bias: basic residues. Residues D118–F137 are compositionally biased toward acidic residues. DDT domains are found at residues T196–E256 and V341–R396. The PHD-type 1 zinc finger occupies D347 to N392. Disordered stretches follow at residues E1091 to N1122, A1158 to N1255, T1413 to S1433, M1657 to S1701, and E1834 to G1888. A coiled-coil region spans residues R1151–S1187. Positions A1158–R1179 are enriched in basic and acidic residues. A compositionally biased stretch (polar residues) spans T1665–T1684. The segment covering K1852 to E1861 has biased composition (basic and acidic residues). 2 consecutive DDT domains span residues A1883–R1953 and I1948–Y2014. 2 PHD-type zinc fingers span residues I1899–E1950 and A1959–E2010. Positions Q2030–V2134 constitute a Bromo domain.

The protein belongs to the BPTF family. Part of a nucleosome remodeling factor-like (NURF-like) complex containing nurf-1 and isw-1.

Its subcellular location is the nucleus. Functionally, histone-binding component of a NURF-like (nucleosome remodeling factor-like) complex, which would catalyze ATP-dependent nucleosome sliding and facilitate transcription of chromatin. Involved in vulval cell fates. The chain is Nucleosome-remodeling factor subunit NURF301-like (nurf-1) from Caenorhabditis elegans.